The following is a 122-amino-acid chain: Large ribosomal subunit protein uL14 (122 aa).

Belongs to the universal ribosomal protein uL14 family. As to quaternary structure, part of the 50S ribosomal subunit. Forms a cluster with proteins L3 and L19. In the 70S ribosome, L14 and L19 interact and together make contacts with the 16S rRNA in bridges B5 and B8.

Its function is as follows. Binds to 23S rRNA. Forms part of two intersubunit bridges in the 70S ribosome. The polypeptide is Large ribosomal subunit protein uL14 (Caldicellulosiruptor saccharolyticus (strain ATCC 43494 / DSM 8903 / Tp8T 6331)).